Reading from the N-terminus, the 305-residue chain is DNA-directed RNA polymerase 35 kDa subunit (305 aa).

This sequence belongs to the poxviridae DNA-directed RNA polymerase 35 kDa subunit family. In terms of assembly, the DNA-dependent RNA polymerase used for intermediate and late genes expression consists of eight subunits 147 kDa, 133 kDa, 35 kDa, 30 kDa, 22 kDa, 19 kDa, 18 kDa and 7 kDa totalling more than 500 kDa in mass. The same holoenzyme, with the addition of the transcription-specificity factor RAP94, is used for early gene expression.

Its subcellular location is the virion. It catalyses the reaction RNA(n) + a ribonucleoside 5'-triphosphate = RNA(n+1) + diphosphate. In terms of biological role, part of the DNA-dependent RNA polymerase which catalyzes the transcription of viral DNA into RNA using the four ribonucleoside triphosphates as substrates. Responsible for the transcription of early, intermediate and late genes. DNA-dependent RNA polymerase associates with the early transcription factor (ETF), itself composed of D6 and A7, thereby allowing the early genes transcription. Late transcription, and probably also intermediate transcription, require newly synthesized RNA polymerase. This chain is DNA-directed RNA polymerase 35 kDa subunit (OPG156), found in Bos taurus (Bovine).